A 215-amino-acid polypeptide reads, in one-letter code: MSERSVSKSREQKRWYSVLAPEQFDRQELGETLAEEPDQVVGRTITTTLGELTGDSGANNTKLTFKITDVGSDTAYTEFIKYELTRDYLRSLVRRGASKVEASITVLTTDDYRIRVQPVALTTKKADRSQEKAIRRVMIDKVHAAAEDRTFESFVDAIVEGNLSSAIYGDAKLIYPLRRVEIQKLTLEARPSEVAAEEETAVDVDADEVAVDADE.

This sequence belongs to the eukaryotic ribosomal protein eS1 family.

The chain is Small ribosomal subunit protein eS1 from Halorubrum lacusprofundi (strain ATCC 49239 / DSM 5036 / JCM 8891 / ACAM 34).